A 351-amino-acid polypeptide reads, in one-letter code: Type II restriction enzyme NmeDI (351 aa).

It catalyses the reaction Endonucleolytic cleavage of DNA to give specific double-stranded fragments with terminal 5'-phosphates.. Its function is as follows. A P subtype restriction enzyme that recognizes the double-stranded sequence 5'-N(12)RCCGGYN(12)-3' and cleaves on both sides of the recognition sequence. In Neisseria meningitidis serogroup C, this protein is Type II restriction enzyme NmeDI (nmeDIRP).